A 330-amino-acid chain; its full sequence is Mitochondrial glycine transporter (330 aa).

3 Solcar repeats span residues Ser-11 to Asn-94, Leu-122 to Arg-206, and Thr-234 to Arg-318. The next 6 helical transmembrane spans lie at Phe-17–Gln-42, Gly-69–Val-95, Leu-128–Glu-153, Gly-181–Lys-204, Ile-238–Ile-264, and Gly-293–Ile-311.

The protein belongs to the mitochondrial carrier (TC 2.A.29) family. SLC25A38 subfamily.

The protein localises to the mitochondrion inner membrane. It carries out the reaction glycine(in) = glycine(out). Functionally, mitochondrial glycine transporter that imports glycine into the mitochondrial matrix. Plays an important role in providing glycine for the first enzymatic step in heme biosynthesis, the condensation of glycine with succinyl-CoA to produce 5-aminolevulinate (ALA) in the mitochondrial matrix. In Sclerotinia sclerotiorum (strain ATCC 18683 / 1980 / Ss-1) (White mold), this protein is Mitochondrial glycine transporter.